The primary structure comprises 433 residues: Enolase (433 aa).

Gln-164 serves as a coordination point for (2R)-2-phosphoglycerate. Glu-206 (proton donor) is an active-site residue. Residues Asp-243, Glu-289, and Asp-316 each coordinate Mg(2+). (2R)-2-phosphoglycerate contacts are provided by Lys-341, Arg-370, Ser-371, and Lys-392. The active-site Proton acceptor is the Lys-341.

Belongs to the enolase family. Requires Mg(2+) as cofactor.

It localises to the cytoplasm. Its subcellular location is the secreted. The protein localises to the cell surface. It catalyses the reaction (2R)-2-phosphoglycerate = phosphoenolpyruvate + H2O. It participates in carbohydrate degradation; glycolysis; pyruvate from D-glyceraldehyde 3-phosphate: step 4/5. Catalyzes the reversible conversion of 2-phosphoglycerate (2-PG) into phosphoenolpyruvate (PEP). It is essential for the degradation of carbohydrates via glycolysis. The chain is Enolase from Borreliella burgdorferi (strain ZS7) (Borrelia burgdorferi).